We begin with the raw amino-acid sequence, 252 residues long: tRNA (guanine-N(1)-)-methyltransferase (252 aa).

Residues Gly-118 and 138–143 contribute to the S-adenosyl-L-methionine site; that span reads IGDYVL.

The protein belongs to the RNA methyltransferase TrmD family. As to quaternary structure, homodimer.

It is found in the cytoplasm. The enzyme catalyses guanosine(37) in tRNA + S-adenosyl-L-methionine = N(1)-methylguanosine(37) in tRNA + S-adenosyl-L-homocysteine + H(+). Its function is as follows. Specifically methylates guanosine-37 in various tRNAs. This Pseudomonas aeruginosa (strain UCBPP-PA14) protein is tRNA (guanine-N(1)-)-methyltransferase.